A 137-amino-acid polypeptide reads, in one-letter code: Small ribosomal subunit protein uS12 (137 aa).

A disordered region spans residues 1–55 (MPTINQLVRKPRKSKVEKSDSPALNKGYNSFKKTQTNVNSPQKRGVCTRVGTMTP). Polar residues predominate over residues 27-42 (GYNSFKKTQTNVNSPQ). A 3-methylthioaspartic acid modification is found at aspartate 102.

This sequence belongs to the universal ribosomal protein uS12 family. As to quaternary structure, part of the 30S ribosomal subunit. Contacts proteins S8 and S17. May interact with IF1 in the 30S initiation complex.

In terms of biological role, with S4 and S5 plays an important role in translational accuracy. Functionally, interacts with and stabilizes bases of the 16S rRNA that are involved in tRNA selection in the A site and with the mRNA backbone. Located at the interface of the 30S and 50S subunits, it traverses the body of the 30S subunit contacting proteins on the other side and probably holding the rRNA structure together. The combined cluster of proteins S8, S12 and S17 appears to hold together the shoulder and platform of the 30S subunit. This Enterococcus faecalis (strain ATCC 700802 / V583) protein is Small ribosomal subunit protein uS12.